A 408-amino-acid polypeptide reads, in one-letter code: LL-diaminopimelate aminotransferase (408 aa).

Residues Y15 and G42 each coordinate substrate. Pyridoxal 5'-phosphate is bound by residues Y72, 108–109, Y132, N187, Y218, and 246–248; these read SK and SFS. Residues K109, Y132, and N187 each coordinate substrate. K249 carries the N6-(pyridoxal phosphate)lysine modification. Positions 257 and 292 each coordinate pyridoxal 5'-phosphate. The substrate site is built by N292 and R388.

It belongs to the class-I pyridoxal-phosphate-dependent aminotransferase family. LL-diaminopimelate aminotransferase subfamily. In terms of assembly, homodimer. The cofactor is pyridoxal 5'-phosphate.

The enzyme catalyses (2S,6S)-2,6-diaminopimelate + 2-oxoglutarate = (S)-2,3,4,5-tetrahydrodipicolinate + L-glutamate + H2O + H(+). It functions in the pathway amino-acid biosynthesis; L-lysine biosynthesis via DAP pathway; LL-2,6-diaminopimelate from (S)-tetrahydrodipicolinate (aminotransferase route): step 1/1. In terms of biological role, involved in the synthesis of meso-diaminopimelate (m-DAP or DL-DAP), required for both lysine and peptidoglycan biosynthesis. Catalyzes the direct conversion of tetrahydrodipicolinate to LL-diaminopimelate. The chain is LL-diaminopimelate aminotransferase from Prochlorococcus marinus (strain MIT 9301).